The chain runs to 336 residues: F420-dependent glucose-6-phosphate dehydrogenase (336 aa).

Coenzyme F420-(gamma-Glu)n is bound at residue D39. H40 acts as the Proton donor in catalysis. Residues T76 and 107-108 each bind coenzyme F420-(gamma-Glu)n; that span reads TG. Residue E109 is the Proton acceptor of the active site. Coenzyme F420-(gamma-Glu)n-binding positions include N112, 177 to 178, and 180 to 181; these read GG and AV. T195, K198, K259, and R283 together coordinate substrate.

It belongs to the F420-dependent glucose-6-phosphate dehydrogenase family. As to quaternary structure, homodimer.

The enzyme catalyses oxidized coenzyme F420-(gamma-L-Glu)(n) + D-glucose 6-phosphate + H(+) = 6-phospho-D-glucono-1,5-lactone + reduced coenzyme F420-(gamma-L-Glu)(n). In terms of biological role, catalyzes the coenzyme F420-dependent oxidation of glucose 6-phosphate (G6P) to 6-phosphogluconolactone. Appears to have a role in resistance to oxidative stress, via its consumption of G6P that serves as a source of reducing power to combat oxidative stress in mycobacteria. This is F420-dependent glucose-6-phosphate dehydrogenase from Mycobacterium avium (strain 104).